Here is a 1411-residue protein sequence, read N- to C-terminus: DNA-directed RNA polymerase subunit beta' (1411 aa).

Residues C70, C72, C85, and C88 each coordinate Zn(2+). 3 residues coordinate Mg(2+): D460, D462, and D464. Zn(2+) is bound by residues C814, C888, C895, and C898.

This sequence belongs to the RNA polymerase beta' chain family. The RNAP catalytic core consists of 2 alpha, 1 beta, 1 beta' and 1 omega subunit. When a sigma factor is associated with the core the holoenzyme is formed, which can initiate transcription. Mg(2+) is required as a cofactor. It depends on Zn(2+) as a cofactor.

It catalyses the reaction RNA(n) + a ribonucleoside 5'-triphosphate = RNA(n+1) + diphosphate. Functionally, DNA-dependent RNA polymerase catalyzes the transcription of DNA into RNA using the four ribonucleoside triphosphates as substrates. The chain is DNA-directed RNA polymerase subunit beta' from Idiomarina loihiensis (strain ATCC BAA-735 / DSM 15497 / L2-TR).